Here is a 208-residue protein sequence, read N- to C-terminus: Large ribosomal subunit protein uL3 (208 aa).

A disordered region spans residues 117–149 (FQGVIKRHGQSRGPMAHGSRYHRRPGSMGPVSP).

It belongs to the universal ribosomal protein uL3 family. As to quaternary structure, part of the 50S ribosomal subunit. Forms a cluster with proteins L14 and L19.

In terms of biological role, one of the primary rRNA binding proteins, it binds directly near the 3'-end of the 23S rRNA, where it nucleates assembly of the 50S subunit. The sequence is that of Large ribosomal subunit protein uL3 from Streptococcus equi subsp. equi (strain 4047).